The sequence spans 297 residues: ATP synthase gamma chain (297 aa).

The protein belongs to the ATPase gamma chain family. F-type ATPases have 2 components, CF(1) - the catalytic core - and CF(0) - the membrane proton channel. CF(1) has five subunits: alpha(3), beta(3), gamma(1), delta(1), epsilon(1). CF(0) has three main subunits: a, b and c.

Its subcellular location is the cell membrane. Produces ATP from ADP in the presence of a proton gradient across the membrane. The gamma chain is believed to be important in regulating ATPase activity and the flow of protons through the CF(0) complex. The chain is ATP synthase gamma chain from Arthrobacter sp. (strain FB24).